A 168-amino-acid polypeptide reads, in one-letter code: Lipoprotein signal peptidase (168 aa).

3 helical membrane passes run 12 to 32 (WYWV…WVLA), 67 to 87 (WQRW…TIWL), and 93 to 113 (NMVR…GNLI). Catalysis depends on residues Asp123 and Asp141. Residues 136–156 (AFNIADAAIFIGAVLIIIDSF) form a helical membrane-spanning segment.

The protein belongs to the peptidase A8 family.

It is found in the cell inner membrane. The catalysed reaction is Release of signal peptides from bacterial membrane prolipoproteins. Hydrolyzes -Xaa-Yaa-Zaa-|-(S,diacylglyceryl)Cys-, in which Xaa is hydrophobic (preferably Leu), and Yaa (Ala or Ser) and Zaa (Gly or Ala) have small, neutral side chains.. It participates in protein modification; lipoprotein biosynthesis (signal peptide cleavage). In terms of biological role, this protein specifically catalyzes the removal of signal peptides from prolipoproteins. In Shewanella amazonensis (strain ATCC BAA-1098 / SB2B), this protein is Lipoprotein signal peptidase.